A 311-amino-acid polypeptide reads, in one-letter code: Transcriptional regulatory protein MoaR1 (311 aa).

The segment at residues 15–117 (LNATTAGAVQ…SEPPGYRLLI (103 aa)) is a DNA-binding region (ompR/PhoB-type).

It belongs to the AfsR/DnrI/RedD regulatory family.

Its function is as follows. Acts as a positive transcriptional regulator of the molybdopterin biosynthesis moa1 locus, promoting the expression of the moaA1B1C1D1 genes. Binds directly to the moaA1 promoter. The chain is Transcriptional regulatory protein MoaR1 (moaR1) from Mycobacterium tuberculosis (strain ATCC 25618 / H37Rv).